The primary structure comprises 816 residues: Phosphatidylinositol 4-kinase beta (816 aa).

Disordered stretches follow at residues methionine 1–leucine 30, glutamate 101–arginine 120, and alanine 248–serine 318. At glycine 2 the chain carries N-acetylglycine. Residues glycine 2–isoleucine 68 form an interaction with ACBD3 region. The PIK helical domain maps to leucine 29–serine 242. Serine 258 carries the phosphoserine modification. A Phosphothreonine modification is found at threonine 263. Serine 266, serine 275, serine 277, serine 284, and serine 294 each carry phosphoserine. Composition is skewed to polar residues over residues aspartate 278–lysine 297 and serine 306–serine 318. A Phosphoserine modification is found at serine 428. The residue at position 438 (threonine 438) is a Phosphothreonine. The residue at position 511 (serine 511) is a Phosphoserine. Threonine 517 and threonine 519 each carry phosphothreonine. The PI3K/PI4K catalytic domain maps to glutamate 535 to threonine 801. Residues valine 541–glycine 547 form a G-loop region. The tract at residues glutamine 668–asparagine 676 is catalytic loop. The segment at histidine 687–threonine 711 is activation loop.

Belongs to the PI3/PI4-kinase family. Type III PI4K subfamily. Interacts with ARF1 and ARF3 in the Golgi complex, but not with ARF4, ARF5 or ARF6. Interacts with NCS1/FREQ in a calcium-independent manner. Interacts with CALN1/CABP8 and CALN2/CABP7; in a calcium-dependent manner; this interaction competes with NCS1/FREQ binding. Interacts with ACBD3. Interacts with ARMH3, YWHAB, YWHAE, YWHAG, YWHAH, YWHAQ, YWHAZ and SFN. Interacts with GGA2 (via VHS domain); the interaction is important for PI4KB location at the Golgi apparatus membrane. Interacts with ATG9A. The cofactor is Mg(2+). Mn(2+) is required as a cofactor.

The protein localises to the endomembrane system. It is found in the mitochondrion outer membrane. It localises to the rough endoplasmic reticulum membrane. The protein resides in the golgi apparatus. Its subcellular location is the golgi apparatus membrane. It catalyses the reaction a 1,2-diacyl-sn-glycero-3-phospho-(1D-myo-inositol) + ATP = a 1,2-diacyl-sn-glycero-3-phospho-(1D-myo-inositol 4-phosphate) + ADP + H(+). With respect to regulation, inhibited by wortmannin. Increased kinase activity upon interaction with NCS1/FREQ. In terms of biological role, phosphorylates phosphatidylinositol (PI) in the first committed step in the production of the second messenger inositol-1,4,5,-trisphosphate (PIP). May regulate Golgi disintegration/reorganization during mitosis, possibly via its phosphorylation. Involved in Golgi-to-plasma membrane trafficking. The sequence is that of Phosphatidylinositol 4-kinase beta (PI4KB) from Bos taurus (Bovine).